Here is a 227-residue protein sequence, read N- to C-terminus: Peptidyl-tRNA hydrolase (227 aa).

A tRNA-binding site is contributed by Tyr-14. The Proton acceptor role is filled by His-19. TRNA contacts are provided by Phe-64, Asn-66, and Asn-112. Residues 182–227 are disordered; the sequence is RIALLTQPPKPPKPPKPPKDGAKETAGKGTEAETAKPPGPAAGRTG. Positions 198 to 215 are enriched in basic and acidic residues; sequence PPKDGAKETAGKGTEAET.

This sequence belongs to the PTH family. Monomer.

The protein resides in the cytoplasm. The catalysed reaction is an N-acyl-L-alpha-aminoacyl-tRNA + H2O = an N-acyl-L-amino acid + a tRNA + H(+). Hydrolyzes ribosome-free peptidyl-tRNAs (with 1 or more amino acids incorporated), which drop off the ribosome during protein synthesis, or as a result of ribosome stalling. Its function is as follows. Catalyzes the release of premature peptidyl moieties from peptidyl-tRNA molecules trapped in stalled 50S ribosomal subunits, and thus maintains levels of free tRNAs and 50S ribosomes. This Rhodospirillum centenum (strain ATCC 51521 / SW) protein is Peptidyl-tRNA hydrolase.